The following is a 150-amino-acid chain: UPF0178 protein PputGB1_5282 (150 aa).

Belongs to the UPF0178 family.

This chain is UPF0178 protein PputGB1_5282, found in Pseudomonas putida (strain GB-1).